Consider the following 203-residue polypeptide: UDP-N-acetylglucosamine transferase subunit ALG13 (203 aa).

The protein belongs to the glycosyltransferase 28 family. In terms of assembly, heterodimer with ALG14 to form a functional enzyme.

The protein localises to the endoplasmic reticulum. The catalysed reaction is an N-acetyl-alpha-D-glucosaminyl-diphospho-di-trans,poly-cis-dolichol + UDP-N-acetyl-alpha-D-glucosamine = an N,N'-diacetylchitobiosyl-diphospho-di-trans,poly-cis-dolichol + UDP + H(+). In terms of biological role, involved in protein N-glycosylation. Essential for the second step of the dolichol-linked oligosaccharide pathway. This chain is UDP-N-acetylglucosamine transferase subunit ALG13 (ALG13), found in Eremothecium gossypii (strain ATCC 10895 / CBS 109.51 / FGSC 9923 / NRRL Y-1056) (Yeast).